A 359-amino-acid chain; its full sequence is Protein-L-isoaspartate O-methyltransferase domain-containing protein 2 (359 aa).

G2 carries N-myristoyl glycine lipidation. The active site involves S64. AdoMet binding motif regions lie at residues 85–94, 160–164, and 181–191; these read LNLGSGTGYL, YDRVY, and LKVGGILVMPL. A BC-box region spans residues 240-250; the sequence is VRSLQDLARLA. The tract at residues 301 to 328 is disordered; it reads SNPSDDTSCEDAEEDRREVAERTLQETK. Basic and acidic residues predominate over residues 314-328; sequence EDRREVAERTLQETK. The CUL-box stretch occupies residues 343-346; the sequence is LPLP.

It belongs to the methyltransferase superfamily. L-isoaspartyl/D-aspartyl protein methyltransferase family.

It is found in the cytoplasm. May act as a substrate recognition component of an ECS (Elongin BC-CUL5-SOCS-box protein) E3 ubiquitin ligase complex which mediates the ubiquitination and subsequent proteasomal degradation of target proteins. May bind to the methyltransferase cofactor S-adenosylmethionine (AdoMet) via the N-terminal AdoMet binding motif, but probably does not display methyltransferase activity. In Mus musculus (Mouse), this protein is Protein-L-isoaspartate O-methyltransferase domain-containing protein 2 (Pcmtd2).